Consider the following 137-residue polypeptide: SMR2 protein (137 aa).

The first 18 residues, 1–18 (MLVVLLTAALLALSSAQN), serve as a signal peptide directing secretion. The disordered stretch occupies residues 14-113 (SSAQNTDEEV…LHHRENLRPQ (100 aa)). Positions 75–85 (QQQQPLPVENQ) are enriched in low complexity. The span at 99–110 (PPPETLHHRENL) shows a compositional bias: basic and acidic residues.

The protein localises to the secreted. In terms of biological role, unknown, male-specific function. This Rattus norvegicus (Rat) protein is SMR2 protein (Smr2).